The primary structure comprises 178 residues: RNA-binding protein (178 aa).

The tract at residues 113–178 (PKIGSKNKKT…KGKGKRGGKR (66 aa)) is disordered. The span at 168–178 (SKGKGKRGGKR) shows a compositional bias: basic residues.

It belongs to the phytoreovirus RNA-binding protein family.

It localises to the host cytoplasm. Functionally, constituent of viral factories. Binds to ssRNA and dsRNA. This chain is RNA-binding protein, found in Wound tumor virus (WTV).